The chain runs to 294 residues: Cell division protein FtsQ (294 aa).

Topologically, residues 1-26 are cytoplasmic; it reads MARGPNRRRVDRVPGERRRRLARAMA. A helical membrane pass occupies residues 27–49; it reads LALPSILALAALGGAATLGWRVG. Residues 50-294 lie on the Periplasmic side of the membrane; the sequence is WKSDLLRVRE…GPQGRSSSLR (245 aa). Positions 55–123 constitute a POTRA domain; it reads LRVREIRFEG…PALEVQLAER (69 aa). The segment at 266–294 is disordered; the sequence is AGRRGEPDGRSSYAAGGGGGPQGRSSSLR.

This sequence belongs to the FtsQ/DivIB family. FtsQ subfamily.

The protein localises to the cell inner membrane. Essential cell division protein. This chain is Cell division protein FtsQ, found in Anaeromyxobacter sp. (strain K).